The sequence spans 239 residues: Ribosomal RNA small subunit methyltransferase G (239 aa).

S-adenosyl-L-methionine-binding positions include G78, F83, 129–130, and R148; that span reads AE.

This sequence belongs to the methyltransferase superfamily. RNA methyltransferase RsmG family.

It localises to the cytoplasm. Specifically methylates the N7 position of a guanine in 16S rRNA. The chain is Ribosomal RNA small subunit methyltransferase G from Clostridium botulinum (strain Alaska E43 / Type E3).